A 410-amino-acid polypeptide reads, in one-letter code: LIMR family protein SELMODRAFT_432208 (410 aa).

5 consecutive transmembrane segments (helical) span residues 30–50 (LWWAVYIIDTVLVIPFAIFFY), 67–87 (LWVVILLTVFCLLLGILYAVI), 129–149 (VTLMVSLFFYIFPFFIDLTTL), 156–176 (ICLDLWLKLSVTYVITLNTII), and 179–199 (ILFMMFGGVGMATLPLSLIFA). Residues 245-274 (RMFRKNVKKVQQELVFLEDDVEALNEAFPQ) are a coiled coil. 2 helical membrane passes run 288-308 (LVFGIVGLALSIIWLLHIIVF) and 330-350 (GGLLGTTTFAIFCYYLVMSVI). Residues 389 to 400 (PSSAMDSSSWSA) show a composition bias toward low complexity. Residues 389–410 (PSSAMDSSSWSADRPCRPWPWP) are disordered.

Belongs to the LIMR family.

The protein localises to the membrane. This Selaginella moellendorffii (Spikemoss) protein is LIMR family protein SELMODRAFT_432208.